Reading from the N-terminus, the 915-residue chain is Probable serine/threonine-protein kinase dyrk2 (915 aa).

Low complexity-rich tracts occupy residues 51–79, 108–119, 170–185, and 196–218; these read TSNT…PTIS, SSSKSSSNSSSI, SSSS…STTS, and SSNS…SGSS. Disordered stretches follow at residues 51-119, 132-334, and 349-533; these read TSNT…SSSI, FSSS…SKSS, and AIKS…PTKS. Positions 234-260 are enriched in polar residues; that stretch reads PSHTISDSPRSSTMKSRSVSISNGSLF. Composition is skewed to low complexity over residues 261-287, 300-333, 352-364, 379-391, 399-425, and 433-533; these read SPTN…SSIS, SSST…PSKS, SRSL…LARV, SSSS…SFSS, SSSK…ASKI, and SLSS…PTKS. Residues 605-902 enclose the Protein kinase domain; sequence FEIVSILGQG…AEQGLKHDWI (298 aa). ATP is bound by residues 611–619 and Lys-634; that span reads LGQGSFCQV. Residue Asp-731 is the Proton acceptor of the active site.

The protein belongs to the protein kinase superfamily. CMGC Ser/Thr protein kinase family. MNB/DYRK subfamily.

The enzyme catalyses L-seryl-[protein] + ATP = O-phospho-L-seryl-[protein] + ADP + H(+). It catalyses the reaction L-threonyl-[protein] + ATP = O-phospho-L-threonyl-[protein] + ADP + H(+). It carries out the reaction L-tyrosyl-[protein] + ATP = O-phospho-L-tyrosyl-[protein] + ADP + H(+). The chain is Probable serine/threonine-protein kinase dyrk2 (dyrk2) from Dictyostelium discoideum (Social amoeba).